Reading from the N-terminus, the 261-residue chain is Ribonuclease HII (261 aa).

Over residues 1–20 (MIRDKSAKRPAKDAPKKAAV) the composition is skewed to basic and acidic residues. Positions 1–23 (MIRDKSAKRPAKDAPKKAAVKEA) are disordered. The RNase H type-2 domain maps to 42–230 (WPVAGCDEAG…VAAARAKHMP (189 aa)). Residues Asp48, Glu49, and Asp139 each coordinate a divalent metal cation.

It belongs to the RNase HII family. Mn(2+) serves as cofactor. Requires Mg(2+) as cofactor.

Its subcellular location is the cytoplasm. The catalysed reaction is Endonucleolytic cleavage to 5'-phosphomonoester.. Its function is as follows. Endonuclease that specifically degrades the RNA of RNA-DNA hybrids. The sequence is that of Ribonuclease HII from Bradyrhizobium diazoefficiens (strain JCM 10833 / BCRC 13528 / IAM 13628 / NBRC 14792 / USDA 110).